The following is an 83-amino-acid chain: Large ribosomal subunit protein bL31B (83 aa).

It belongs to the bacterial ribosomal protein bL31 family. Type B subfamily. Part of the 50S ribosomal subunit.

The protein is Large ribosomal subunit protein bL31B of Levilactobacillus brevis (strain ATCC 367 / BCRC 12310 / CIP 105137 / JCM 1170 / LMG 11437 / NCIMB 947 / NCTC 947) (Lactobacillus brevis).